The following is a 440-amino-acid chain: Transposon Ty1-BL Gag polyprotein (440 aa).

Polar residues-rich tracts occupy residues 20 to 31 (SVTSKEVQTTQD), 46 to 55 (VSTQANSQQP), and 137 to 168 (VGTH…TNQH). 3 disordered regions span residues 20–84 (SVTS…QNGP), 137–173 (VGTH…RPPP), and 350–424 (QQES…TTEP). Residues 299–401 (NNGIPINNKV…NSQSRTARAH (103 aa)) form an RNA-binding region. Basic and acidic residues predominate over residues 363 to 372 (SPSDEKKDSR). Over residues 373–411 (TYTNTTKPKSITRNSQKPNNSQSRTARAHNVSTFNNSPG) the composition is skewed to polar residues.

As to quaternary structure, homotrimer.

The protein resides in the cytoplasm. Functionally, capsid protein (CA) is the structural component of the virus-like particle (VLP), forming the shell that encapsulates the retrotransposons dimeric RNA genome. The particles are assembled from trimer-clustered units and there are holes in the capsid shells that allow for the diffusion of macromolecules. CA also has nucleocapsid-like chaperone activity, promoting primer tRNA(i)-Met annealing to the multipartite primer-binding site (PBS), dimerization of Ty1 RNA and initiation of reverse transcription. This chain is Transposon Ty1-BL Gag polyprotein (TY1A-BL), found in Saccharomyces cerevisiae (strain ATCC 204508 / S288c) (Baker's yeast).